A 325-amino-acid chain; its full sequence is UDP-N-acetylglucosamine transporter (325 aa).

8 helical membrane passes run 8 to 24 (VSLGILVFQTTSLVLTM), 42 to 58 (AVVVAELLKIMACILLV), 138 to 154 (VYQWLSLVILMTGVAFV), 173 to 189 (FVGLMAVLTACFSSGFA), 209 to 225 (IQLGFFGSIFGLMGVYI), 246 to 262 (IVVVLQALGGLVIAAVI), 268 to 284 (ILKGFATSLSIILSTLI), and 295 to 311 (TSVFFLGAILVITATFL).

This sequence belongs to the nucleotide-sugar transporter family. SLC35A subfamily. Interacts with SLC35A2; the interaction is reduced in the presence of SLC35A4. Found in a complex with SLC35A2 and SLC35A4. Interacts with MGAT4B. Post-translationally, O-Glcnacylation regulates the stability of SLC35A3 and the specific complex formation with MGAT4B.

The protein localises to the golgi apparatus membrane. It catalyses the reaction UMP(out) + UDP-N-acetyl-alpha-D-glucosamine(in) = UMP(in) + UDP-N-acetyl-alpha-D-glucosamine(out). Its function is as follows. Transports diphosphate-N-acetylglucosamine (UDP-GlcNAc) from the cytosol into the lumen of the Golgi apparatus, functioning as an antiporter that exchanges UDP-N-acetyl-alpha-D-glucosamine for UMP. May supply UDP-GlcNAc as substrate for Golgi-resident glycosyltransferases that generate highly branched, multiantennary complex N-glycans and keratan sulfate. However, the exact role of SLC35A3 still needs to be elucidated, it could be a member of a catalytically more efficient multiprotein complex rather than function independently as a single transporter. In Homo sapiens (Human), this protein is UDP-N-acetylglucosamine transporter (SLC35A3).